Here is a 354-residue protein sequence, read N- to C-terminus: Protein RecA (354 aa).

Position 67–74 (67–74) interacts with ATP; the sequence is GPESSGKT.

The protein belongs to the RecA family.

It is found in the cytoplasm. Can catalyze the hydrolysis of ATP in the presence of single-stranded DNA, the ATP-dependent uptake of single-stranded DNA by duplex DNA, and the ATP-dependent hybridization of homologous single-stranded DNAs. It interacts with LexA causing its activation and leading to its autocatalytic cleavage. This Yersinia enterocolitica serotype O:8 / biotype 1B (strain NCTC 13174 / 8081) protein is Protein RecA.